A 450-amino-acid chain; its full sequence is MQFTHLVALALALATSEAAHQGFNYGNTKSDGSAKSQADFQAEFSTAKNLVGTSGFTSARLYTMIQGGTANTPISAIPAAITEQTSLLLGLWASGGNFANEIAALKAAIAQYGDDLAKLVVGISVGSEDLYRNSVDGVKANAGIGTNPDEIVSYINEVRSTIAGTKLSGAPIGHVDTWTAWVNGSNSAVIDACDWLGFDGYPYFQNTMANSISDAKALFDESVAKTQAVAKGKEVWITETGWPVSGKTENLAVANLANAKTYWDEVGCPLFGKTNTWWYILQDADPVTPNPSFGIVGSTLSTTPLFDLSCSASSSSSAAASSTAGPSASSVIGGKASGFTTAAANSAKPTFTVGKGPGGSYNGTGFWNSTSSARPSSSAISGSSSGSAAGSSGSSGSSGSGASGASGQSSSSTGSSSAPSTSNILSNAASGLSGSICGAVVAVCLALAAL.

The N-terminal stretch at 1–18 is a signal peptide; sequence MQFTHLVALALALATSEA. The Proton donor role is filled by E128. An N-linked (GlcNAc...) asparagine glycan is attached at N183. The Nucleophile role is filled by E239. 2 N-linked (GlcNAc...) asparagine glycosylation sites follow: N362 and N368. Low complexity-rich tracts occupy residues 377–395 and 405–420; these read SSAI…SGSS and ASGQ…SAPS. A disordered region spans residues 377–420; that stretch reads SSAISGSSSGSAAGSSGSSGSSGSGASGASGQSSSSTGSSSAPS. Residue N427 is the site of GPI-anchor amidated asparagine attachment. Positions 428–450 are cleaved as a propeptide — removed in mature form; sequence AASGLSGSICGAVVAVCLALAAL.

The protein belongs to the glycosyl hydrolase 17 family. In terms of processing, the GPI-anchor is attached to the protein in the endoplasmic reticulum and serves to target the protein to the cell surface. There, the glucosamine-inositol phospholipid moiety is cleaved off and the GPI-modified mannoprotein is covalently attached via its lipidless GPI glycan remnant to the 1,6-beta-glucan of the outer cell wall layer.

Its subcellular location is the cell membrane. The protein localises to the secreted. It is found in the cell wall. It carries out the reaction Hydrolysis of (1-&gt;3)-beta-D-glucosidic linkages in (1-&gt;3)-beta-D-glucans.. Functionally, glucanases play a role in cell expansion during growth, in cell-cell fusion during mating, and in spore release during sporulation. This enzyme may be involved in beta-glucan degradation and also function biosynthetically as a transglycosylase. In Aspergillus fumigatus (strain CBS 144.89 / FGSC A1163 / CEA10) (Neosartorya fumigata), this protein is Probable glucan endo-1,3-beta-glucosidase eglC (eglC).